Reading from the N-terminus, the 229-residue chain is Urease accessory protein UreF (229 aa).

Belongs to the UreF family. UreD, UreF and UreG form a complex that acts as a GTP-hydrolysis-dependent molecular chaperone, activating the urease apoprotein by helping to assemble the nickel containing metallocenter of UreC. The UreE protein probably delivers the nickel.

It localises to the cytoplasm. Its function is as follows. Required for maturation of urease via the functional incorporation of the urease nickel metallocenter. In Staphylococcus aureus (strain bovine RF122 / ET3-1), this protein is Urease accessory protein UreF.